The sequence spans 296 residues: Enoyl-CoA hydratase AFT3-1 (296 aa).

The Peroxisomal targeting signal type 1 signature appears at 294–296; that stretch reads PKL.

Belongs to the enoyl-CoA hydratase/isomerase family.

The protein localises to the peroxisome. It catalyses the reaction a (3S)-3-hydroxyacyl-CoA = a (2E)-enoyl-CoA + H2O. The enzyme catalyses a 4-saturated-(3S)-3-hydroxyacyl-CoA = a (3E)-enoyl-CoA + H2O. It functions in the pathway mycotoxin biosynthesis. Functionally, enoyl-CoA hydratase; part of the gene clusters that mediate the biosynthesis of the host-selective toxins (HSTs) AF-toxins responsible for Alternaria black spot of strawberry disease by the strawberry pathotype. AF-toxin I and III are valine derivatives of 2,3-dyhydroxy-isovaleric acid and 2-hydroxy-isovaleric acid respectively, while AF II is an isoleucine derivative of 2-hydroxy-valeric acid. These derivatives are bound to a 9,10-epoxy-8-hydroxy-9-methyl-decatrienoic acid (EDA) moiety. On cellular level, AF-toxins affect plasma membrane of susceptible cells and cause a sudden increase in loss of K(+) after a few minutes of toxin treatment. The aldo-keto reductase AFTS1 catalyzes the conversion of 2-keto-isovaleric acid (2-KIV) to 2-hydroxy-isovaleric acid (2-HIV) by reduction of its ketone to an alcohol. The acyl-CoA ligase AFT1, the hydrolase AFT2 and the enoyl-CoA hydratases AFT3 and AFT6, but also the polyketide synthase AFT9, the acyl-CoA dehydrogenase AFT10, the cytochrome P450 monooxygenase AFT11 and the oxidoreductase AFT12 are all involved in the biosynthesis of the AK-, AF- and ACT-toxin common EDA structural moiety. The exact function of each enzyme, and of additional enzymes identified within the AF-toxin clusters have still to be determined. In Alternaria alternata (Alternaria rot fungus), this protein is Enoyl-CoA hydratase AFT3-1 (AFT3-1).